A 263-amino-acid chain; its full sequence is MKSSMAMIKHKKELVEYARHLKLPNLAEHVGVILHEAQEKQLTYSEFLANCLAREIQGRERKSYLTRLKLSGLPAKYDLDLYDYDRAEGMDNRRLRELRELVWVNQAYNLLLVGPSGTGKTFIAAGLVYEAVKAGYEAYLMTLEELLTCLKTKEVSAHAMKTYKRIMKARLLAIDDATLFPLKREEAVLLFKLVNDFQERTSLIITANKALTRWLETLEDEAVTAALLDRLLYCCEIIRLGGTSYRMQNRKTIFSNQNTDIGT.

Residue 114–121 (GPSGTGKT) coordinates ATP.

This sequence belongs to the IS21/IS1162 putative ATP-binding protein family.

The polypeptide is Insertion sequence IS21-like putative ATP-binding protein (tnpB) (Bacteroides fragilis).